The following is an 856-amino-acid chain: MPSRSPACRPRGRNRRSAADAVARPLALALILVSTLPRAAHSQDLALPPVQPRGVRRTMTCDNIPEPFGTRSRGASRLPGFEVTCGPNREAMLSIGGDAYMIDFVSVSGSYVVVFAEPITQVCYDGKGKPTPDTGTGAKSSEGTTTTFTWSLEGTPFTFSKSNKLVNFGCNRTLMANFFIVPGDSSPLYTSCTTTCNTLQISGSCLGEACCEAPMDQVNGAKAFSLSFERTTANGTGEEDGTCSAAFFLDKDETVFTFSGDEVRPLKTALLPPGERRMVLDWAIGSTSCEQTQSYTFEKLCKYGTCVDAPTGAGYLCKCPSGYDGNPYVSDGCQDINECRNYNSNNCTYQNLCNNTLGGYTCSCPENNIGDGYRTGTGCNTTLATPVSPSQQPQGINVCDHPEKNPCTYIKYCIDLEGVVSCACPEGMSGDGRKNGRGCCFSCQKHFPLDTVLGVSLVLMVTTTTAASCYCWAVKKRELGRKRAELFRKNGGLLLQQRFSTITSQGEDQYSSKIFSAEELKAATDNYSESRILGRGGQGTVYKGILPDQTVVAIKKSKVFDESQVEQFVNEIAILSQIDHPNVVKLLGCCLETQVPLLVYEFISNGTLFQHIHNRNATRPLTWEDCLRIAAETADALAYLHSASSIPIIHRDIKSSNILLDGNFVAKIADFGASRSVPFDQTHITTLIQGTIGYLDPEYFQSSQLTEKSDVYSFGVVLAELLTRQKPISAARPEDSCNLAMHLVVLFNKGRLLQEIEPHILAEAGEDQCYAVAELSVRCLNVKGEERPAMVVVASVLQELRRSFTIDQAVGIKDESIQENSEQEEKHLHESRSIPSLQSSEVSTQCSMEAKMSSFC.

The N-terminal stretch at 1 to 42 (MPSRSPACRPRGRNRRSAADAVARPLALALILVSTLPRAAHS) is a signal peptide. N-linked (GlcNAc...) asparagine glycosylation is found at Asn-171 and Asn-234. The EGF-like 1 domain occupies 297–334 (FEKLCKYGTCVDAPTGAGYLCKCPSGYDGNPYVSDGCQ). Cystine bridges form between Cys-301-Cys-306, Cys-319-Cys-333, Cys-339-Cys-353, Cys-347-Cys-362, and Cys-364-Cys-379. The EGF-like 2; calcium-binding domain occupies 335-380 (DINECRNYNSNNCTYQNLCNNTLGGYTCSCPENNIGDGYRTGTGCN). Residues Asn-346 and Asn-354 are each glycosylated (N-linked (GlcNAc...) asparagine). Asn-380 carries N-linked (GlcNAc...) asparagine glycosylation. A helical membrane pass occupies residues 452-470 (VLGVSLVLMVTTTTAASCY). One can recognise a Protein kinase domain in the interval 527–805 (YSESRILGRG…VLQELRRSFT (279 aa)). ATP contacts are provided by residues 533–541 (LGRGGQGTV) and Lys-555. Residue Asp-652 is the Proton acceptor of the active site. A disordered region spans residues 816–844 (SIQENSEQEEKHLHESRSIPSLQSSEVST). Positions 823–832 (QEEKHLHESR) are enriched in basic and acidic residues. Polar residues predominate over residues 833–844 (SIPSLQSSEVST).

This sequence belongs to the protein kinase superfamily. Ser/Thr protein kinase family. In terms of assembly, interacts with WAK17 isoform 2; the interaction is direct. Interacts with LRR5; the interaction is direct. As to quaternary structure, interacts with WAK17 isoform 1; the interaction is direct. (Microbial infection) Interacts with G.zeae CFEM1 (via CFEM domain); the interaction is direct. Interacts with G.zeae CFEMN1; the interaction is direct. Interacts with G.zeae CFEM5; the interaction is direct. Mn(2+) is required as a cofactor. It depends on Mg(2+) as a cofactor.

It is found in the cell membrane. The catalysed reaction is L-seryl-[protein] + ATP = O-phospho-L-seryl-[protein] + ADP + H(+). The enzyme catalyses L-threonyl-[protein] + ATP = O-phospho-L-threonyl-[protein] + ADP + H(+). Its function is as follows. Kinase that contributes to activation of the hypersensitive response, a form of programmed cell death, upon fungal infection. Secreted protein that contributes to activation of the hypersensitive response, a form of programmed cell death, upon fungal infection. May sense the presence of fungal material and relay the signal to WAK17 isoform 1. The sequence is that of Wall-associated receptor kinase 17 from Zea mays (Maize).